Here is a 323-residue protein sequence, read N- to C-terminus: Phosphatidylglycerol--prolipoprotein diacylglyceryl transferase (323 aa).

The next 3 helical transmembrane spans lie at 15-35, 58-78, and 106-126; these read VIQG…ILIS, FMFS…TLVY, and GMAI…TINT. An a 1,2-diacyl-sn-glycero-3-phospho-(1'-sn-glycerol)-binding site is contributed by Arg156. The next 2 helical transmembrane spans lie at 242-262 and 289-309; these read GFIF…IEYL and ISMG…WIIV.

This sequence belongs to the Lgt family.

The protein localises to the cell inner membrane. The catalysed reaction is L-cysteinyl-[prolipoprotein] + a 1,2-diacyl-sn-glycero-3-phospho-(1'-sn-glycerol) = an S-1,2-diacyl-sn-glyceryl-L-cysteinyl-[prolipoprotein] + sn-glycerol 1-phosphate + H(+). The protein operates within protein modification; lipoprotein biosynthesis (diacylglyceryl transfer). Functionally, catalyzes the transfer of the diacylglyceryl group from phosphatidylglycerol to the sulfhydryl group of the N-terminal cysteine of a prolipoprotein, the first step in the formation of mature lipoproteins. This Borreliella afzelii (strain PKo) (Borrelia afzelii) protein is Phosphatidylglycerol--prolipoprotein diacylglyceryl transferase.